The primary structure comprises 745 residues: 5-methyltetrahydropteroyltriglutamate--homocysteine methyltransferase (745 aa).

Residues 17–20 and Lys111 contribute to the 5-methyltetrahydropteroyltri-L-glutamate site; that span reads RELK. Residues 421–423 and Glu474 each bind L-homocysteine; that span reads IGS. Residues 421 to 423 and Glu474 each bind L-methionine; that span reads IGS. 5-methyltetrahydropteroyltri-L-glutamate-binding positions include 505 to 506 and Trp551; that span reads RC. Asp589 is an L-homocysteine binding site. Residue Asp589 coordinates L-methionine. Residue Glu595 participates in 5-methyltetrahydropteroyltri-L-glutamate binding. Zn(2+)-binding residues include His631, Cys633, and Glu655. His684 serves as the catalytic Proton donor. Residue Cys716 participates in Zn(2+) binding.

This sequence belongs to the vitamin-B12 independent methionine synthase family. Zn(2+) is required as a cofactor.

It carries out the reaction 5-methyltetrahydropteroyltri-L-glutamate + L-homocysteine = tetrahydropteroyltri-L-glutamate + L-methionine. The protein operates within amino-acid biosynthesis; L-methionine biosynthesis via de novo pathway; L-methionine from L-homocysteine (MetE route): step 1/1. Functionally, catalyzes the transfer of a methyl group from 5-methyltetrahydrofolate to homocysteine resulting in methionine formation. In Thermodesulfovibrio yellowstonii (strain ATCC 51303 / DSM 11347 / YP87), this protein is 5-methyltetrahydropteroyltriglutamate--homocysteine methyltransferase.